Consider the following 419-residue polypeptide: UDP-N-acetylglucosamine 1-carboxyvinyltransferase (419 aa).

22-23 contributes to the phosphoenolpyruvate binding site; sequence KN. Arg93 provides a ligand contact to UDP-N-acetyl-alpha-D-glucosamine. Cys117 (proton donor) is an active-site residue. A 2-(S-cysteinyl)pyruvic acid O-phosphothioketal modification is found at Cys117. Asp306 and Ile328 together coordinate UDP-N-acetyl-alpha-D-glucosamine.

This sequence belongs to the EPSP synthase family. MurA subfamily.

Its subcellular location is the cytoplasm. It carries out the reaction phosphoenolpyruvate + UDP-N-acetyl-alpha-D-glucosamine = UDP-N-acetyl-3-O-(1-carboxyvinyl)-alpha-D-glucosamine + phosphate. It participates in cell wall biogenesis; peptidoglycan biosynthesis. Cell wall formation. Adds enolpyruvyl to UDP-N-acetylglucosamine. The polypeptide is UDP-N-acetylglucosamine 1-carboxyvinyltransferase (Ruthia magnifica subsp. Calyptogena magnifica).